A 247-amino-acid polypeptide reads, in one-letter code: tRNA (guanine-N(1)-)-methyltransferase (247 aa).

Residue Gly-126 coordinates S-adenosyl-L-methionine.

The protein belongs to the RNA methyltransferase TrmD family. Homodimer.

It localises to the cytoplasm. The catalysed reaction is guanosine(37) in tRNA + S-adenosyl-L-methionine = N(1)-methylguanosine(37) in tRNA + S-adenosyl-L-homocysteine + H(+). Its function is as follows. Specifically methylates guanosine-37 in various tRNAs. The polypeptide is tRNA (guanine-N(1)-)-methyltransferase (Jannaschia sp. (strain CCS1)).